A 441-amino-acid polypeptide reads, in one-letter code: Ribulose bisphosphate carboxylase large chain (441 aa).

K5 carries the N6,N6,N6-trimethyllysine modification. T164 lines the substrate pocket. K166 functions as the Proton acceptor in the catalytic mechanism. K168 provides a ligand contact to substrate. Mg(2+) is bound by residues K192, D194, and E195. K192 bears the N6-carboxylysine mark. Residue H285 is the Proton acceptor of the active site. Residues R286, H318, and S370 each contribute to the substrate site.

Belongs to the RuBisCO large chain family. Type I subfamily. As to quaternary structure, heterohexadecamer of 8 large chains and 8 small chains; disulfide-linked. The disulfide link is formed within the large subunit homodimers. The cofactor is Mg(2+). In terms of processing, the disulfide bond which can form in the large chain dimeric partners within the hexadecamer appears to be associated with oxidative stress and protein turnover.

The protein localises to the plastid. The protein resides in the chloroplast. It catalyses the reaction 2 (2R)-3-phosphoglycerate + 2 H(+) = D-ribulose 1,5-bisphosphate + CO2 + H2O. The enzyme catalyses D-ribulose 1,5-bisphosphate + O2 = 2-phosphoglycolate + (2R)-3-phosphoglycerate + 2 H(+). Its function is as follows. RuBisCO catalyzes two reactions: the carboxylation of D-ribulose 1,5-bisphosphate, the primary event in carbon dioxide fixation, as well as the oxidative fragmentation of the pentose substrate in the photorespiration process. Both reactions occur simultaneously and in competition at the same active site. In Hemionitis engywookii (Fendler's false cloak fern), this protein is Ribulose bisphosphate carboxylase large chain.